A 404-amino-acid chain; its full sequence is G-protein coupled receptor 143 (404 aa).

Over 1-28 (MASPRLGTFCCPTRDAATQLVLSFQPRA) the chain is Extracellular. Residues 29-49 (FHALCLGSGGLRLALGLLQLL) traverse the membrane as a helical segment. Over 50 to 78 (PGRRPAGPGSPATSPPASVRILRAAAACD) the chain is Cytoplasmic. A helical transmembrane segment spans residues 79 to 99 (LLGCLGMVIRSTVWLGFPNFV). At 100-124 (DSVSDMNHTEIWPAAFCVGSAMWIQ) the chain is on the extracellular side. A glycan (N-linked (GlcNAc...) asparagine) is linked at Asn106. A helical membrane pass occupies residues 125–145 (LLYSACFWWLFCYAVDAYLVI). At 146–149 (RRSA) the chain is on the cytoplasmic side. A helical membrane pass occupies residues 150 to 170 (GLSTILLYHIMAWGLATLLCV). Over 171-191 (EGAAMLYYPSVSRCERGLDHA) the chain is Extracellular. The helical transmembrane segment at 192-212 (IPHYVTMYLPLLLVLVANPIL) threads the bilayer. At 213-248 (FQKTVTAVASLLKGRQGIYTENERRMGAVIKIRFFK) the chain is on the cytoplasmic side. The segment at 221–238 (ASLLKGRQGIYTENERRM) is necessary for its G protein-activation ability and normal distribution of melanosomes. The lysosomal/melanosomal membrane localization signal signature appears at 222–231 (SLLKGRQGIY). A helical membrane pass occupies residues 249–269 (IMLVLIICWLSNIINESLLFY). The Extracellular portion of the chain corresponds to 270-292 (LEMQTDINGGSLKPVRTAAKTTW). A helical transmembrane segment spans residues 293-313 (FIMGILNPAQGFLLSLAFYGW). Over 314-404 (TGCSLGFQSP…DPALPTHGDL (91 aa)) the chain is Cytoplasmic. The lysosomal/melanosomal membrane localization signal motif lies at 329 to 330 (WE). The interval 338–404 (EGAHPSPLMP…DPALPTHGDL (67 aa)) is disordered. Polar residues predominate over residues 355–366 (KVSQVGGQTSDE).

Belongs to the G-protein coupled receptor OA family. Interacts with heterotrimeric G(i) proteins. Interacts with ARRB1 and ARRB2. Interacts with MLANA. Glycosylated. Post-translationally, phosphorylated. As to expression, expressed at high levels in the retina, including the retinal pigment epithelium (RPE), and in melanocytes. Weak expression is observed in brain and adrenal gland.

Its subcellular location is the melanosome membrane. It is found in the lysosome membrane. The protein resides in the apical cell membrane. Its function is as follows. Receptor for tyrosine, L-DOPA and dopamine. After binding to L-DOPA, stimulates Ca(2+) influx into the cytoplasm, increases secretion of the neurotrophic factor SERPINF1 and relocalizes beta arrestin at the plasma membrane; this ligand-dependent signaling occurs through a G(q)-mediated pathway in melanocytic cells. Its activity is mediated by G proteins which activate the phosphoinositide signaling pathway. Also plays a role as an intracellular G protein-coupled receptor involved in melanosome biogenesis, organization and transport. In Homo sapiens (Human), this protein is G-protein coupled receptor 143 (GPR143).